The primary structure comprises 62 residues: Large ribosomal subunit protein eL37 (62 aa).

4 residues coordinate Zn(2+): cysteine 20, cysteine 23, cysteine 35, and cysteine 38. The segment at 20 to 38 adopts a C4-type zinc-finger fold; it reads CRRCGRRSYHVRKKACSAC.

This sequence belongs to the eukaryotic ribosomal protein eL37 family. It depends on Zn(2+) as a cofactor.

Functionally, binds to the 23S rRNA. This chain is Large ribosomal subunit protein eL37, found in Methanococcus aeolicus (strain ATCC BAA-1280 / DSM 17508 / OCM 812 / Nankai-3).